Consider the following 276-residue polypeptide: MSSNSDHHISVEHTDGVATIRFTRPSKHNAASAQLLLETLEALYRLESDDSVGAIVLTGEGAVFSAGFDLEEVPMGPASEIQSHFRLKALYYHAVIHMLARIEKPTLAAINGPAVGGGLGMSLACDLAVCTDRATFLPAWMSIGIANDASSSFYLPRIVGYRRAMEWLLTNRTLGADEAYEWGVVNRVFSEADFQSRVGEIARQLAAAPTHLQGLVKNRIQEGSSETLESCTEHEVQNVIASVGHPHFAERLAMFRSKEMRSSALAVDLDAVCGGR.

Residue 66–71 (AGFDLE) participates in substrate binding. The Proton acceptor role is filled by His-93. Substrate is bound at residue Gly-117. Asp-148 serves as the catalytic Nucleophile. Arg-261 serves as a coordination point for substrate.

Belongs to the enoyl-CoA hydratase/isomerase family. Homotetramer.

The catalysed reaction is 4-chlorobenzoyl-CoA + H2O = 4-hydroxybenzoyl-CoA + chloride + H(+). The protein operates within xenobiotic degradation; 4-chlorobenzoate degradation; 4-hydroxybenzoate from 4-chlorobenzoate: step 2/3. In terms of biological role, dehalogenates 4-chlorobenzoyl-CoA, 4-iodobenzoyl-CoA, 4-bromobenzoyl-CoA and, at a slower rate, 4-fluorobenzoyl-CoA. Does not dehalogenate 2-chlorobenzoyl-CoA or 3-chlorobenzoyl-CoA. This is 4-chlorobenzoyl coenzyme A dehalogenase-2 from Arthrobacter sp.